We begin with the raw amino-acid sequence, 591 residues long: Aspartate--tRNA(Asp/Asn) ligase (591 aa).

Glutamate 174 is a binding site for L-aspartate. The aspartate stretch occupies residues 198–201 (QLFK). Arginine 220 is a binding site for L-aspartate. ATP contacts are provided by residues 220–222 (RDE) and glutamine 229. Histidine 450 contributes to the L-aspartate binding site. Glutamate 483 provides a ligand contact to ATP. Arginine 490 serves as a coordination point for L-aspartate. 535–538 (GLDR) lines the ATP pocket.

Belongs to the class-II aminoacyl-tRNA synthetase family. Type 1 subfamily. As to quaternary structure, homodimer.

It is found in the cytoplasm. It catalyses the reaction tRNA(Asx) + L-aspartate + ATP = L-aspartyl-tRNA(Asx) + AMP + diphosphate. Its function is as follows. Aspartyl-tRNA synthetase with relaxed tRNA specificity since it is able to aspartylate not only its cognate tRNA(Asp) but also tRNA(Asn). Reaction proceeds in two steps: L-aspartate is first activated by ATP to form Asp-AMP and then transferred to the acceptor end of tRNA(Asp/Asn). This chain is Aspartate--tRNA(Asp/Asn) ligase, found in Pseudomonas fluorescens (strain Pf0-1).